The chain runs to 171 residues: Adenine phosphoribosyltransferase (171 aa).

Belongs to the purine/pyrimidine phosphoribosyltransferase family. As to quaternary structure, homodimer.

The protein localises to the cytoplasm. It catalyses the reaction AMP + diphosphate = 5-phospho-alpha-D-ribose 1-diphosphate + adenine. It functions in the pathway purine metabolism; AMP biosynthesis via salvage pathway; AMP from adenine: step 1/1. Catalyzes a salvage reaction resulting in the formation of AMP, that is energically less costly than de novo synthesis. The sequence is that of Adenine phosphoribosyltransferase (apt) from Prochlorococcus marinus subsp. pastoris (strain CCMP1986 / NIES-2087 / MED4).